The sequence spans 1500 residues: MEGSDFVDPAFSSGERISASDLNSEHIIQAENHSFANRISMDMDVPDGHQLDSNLTGFRWKRVLNPTGPQPRPRHGHRAINIKELMVVFGGGNEGIVDELHVYNTVTNQWYVPVLKGDVPNGCAAYGFVVEGTRMFVFGGMIEYGKYSNELYELQATKWEWRKMYPESPDSGLSPCPRLGHSFTMVGEKIFLFGGLANESDDPKNNIPKYLNDLYILDTRGVHSHNGKWIVPKTYGDSPPPRESHTGISFATKSNGNLNLLIYGGMSGCRLGDLWLLETDSMTWSKPKTSGEAPLPRSLHSSTMIGNKMYVFGGWVPLVINDSKSTTEREWKCTNTLAVLDLETMTWENVTLDTVEENVPRARAGHCAVGIQSRLYVWSGRDGYRKAWNNQVCCKDLWYLEVSKPLYAVKVALVRASTHALELSWTATTFAAAYVLQIQKIEQPLNTSSKLLSNNIVQQGTPTSAETSGINISANRSGSALGLGVEATSTVLKLEKESLQLSGCQPETNVQPSVNDLLQSMSQPSSPASRADKDPLSSGGGTTFNLSTSVASVHPQISVISSTAAVTGNDTASPSGAINSILQKFRPVVTAVRTSTTTAVSIATSTSDPLSVRVPSTMSANVVLSSSSSTLRIVPSVTASHSLRIASSQASGNNCRSSSAINILKTALPNVAVQSQPTSSTTTSIGGKQYFIQKPLTLAPNVQLQFVKTSGGMTVQTLPKVNFTASKGTPPHGISIANPHLASGITQIQGSTVPGSQIQKPIVSGNVLKLVSPHTMAGGKLIMKNSNILQMGKVTPNVMGGKPAFVITNKQGTPLGNQQIIIVTTGGNVRSVPTSTVMTSAGGSASGTNIVSIVNSTSTTPSPLQALSGQKTLISNQSGVKMLRNISSVQASSSMAFGQKQSGTPIHQKTALYIGGKAVTVMSTNTSMAASGNKVMVLPGTSSNNSPATTTALSARKSFVFNAGGSPRTVTLATKSINAKSIPQSQPVTETNNHSVATIKDTDPMDDIIEQLDGAGDLLKLSESEGQHGSEENENNGENATSSSASALFTGGDTAGPSRAQNPIVMEHPVDIIEDVSGVSSTTDVNETAIVSGDTIESLKMSEKENDDVKSMGEKSILSDDCHQPTTSETEAATILTTIKSAEALVLETAEIRKDHTGCTIGSLKENQDENKKFKQRQESSPSQNIHQFQNVDGSQLEALASAALLQAATSDTTALALKELIERPESETNTRSSNIAEIQQNNVQSTLAVVVPNTSQNENQKWHTVGVFKDLSHTVTSYIDSNCISDSFFDGIDVDNLPDFSKFPRTNLEPGTAYRFRLSAINSCGRGEWGEISSFKTCLPGFPGAPSAIKISKDVKEGAHLTWEPPPAQKTKEIIEYSVYLAVKPTAKDKALSTPQLAFVRVYVGAANQCTVPNASLSNAHVDCSNKPAIIFRIAARNQKGYGPATQVRWLQDPAAAKQHTPTVTPNLKRGPEKSTIGSSNIANTFCSPHKRGRNGLHD.

5 Kelch repeats span residues 85 to 133 (LMVV…VEGT), 135 to 181 (MFVF…RLGH), 189 to 237 (KIFL…TYGD), 259 to 307 (NLLI…MIGN), and 308 to 373 (KMYV…GIQS). The residue at position 477 (Ser477) is a Phosphoserine. The segment covering 517–528 (LLQSMSQPSSPA) has biased composition (polar residues). The segment at 517-543 (LLQSMSQPSSPASRADKDPLSSGGGTT) is disordered. Phosphoserine is present on residues Ser958 and Ser966. The segment at 1024 to 1061 (SEGQHGSEENENNGENATSSSASALFTGGDTAGPSRAQ) is disordered. Low complexity predominate over residues 1036–1047 (NGENATSSSASA). Thr1126 is subject to Phosphothreonine. Positions 1161–1185 (IGSLKENQDENKKFKQRQESSPSQN) are disordered. Residues 1166-1178 (ENQDENKKFKQRQ) are compositionally biased toward basic and acidic residues. 2 Fibronectin type-III domains span residues 1244-1341 (VQST…TCLP) and 1346-1457 (APSA…DPAA). Residues 1458-1500 (AKQHTPTVTPNLKRGPEKSTIGSSNIANTFCSPHKRGRNGLHD) are disordered. The short motif at 1470-1495 (KRGPEKSTIGSSNIANTFCSPHKRGR) is the Bipartite nuclear localization signal element. Residues 1477 to 1488 (TIGSSNIANTFC) are compositionally biased toward polar residues. Ser1489 is modified (phosphoserine). Over residues 1490 to 1500 (PHKRGRNGLHD) the composition is skewed to basic residues.

Core component of several methyltransferase-containing complexes. Component of the SET1 complex, composed at least of the catalytic subunit Set1, wds/WDR5, Wdr82, Rbbp5, ash2, Cfp1/CXXC1, hcf and Dpy-30L1. Component of the MLL3/4 complex composed at least of the catalytic subunit trr, ash2, Rbbp5, Dpy-30L1, wds, hcf, ptip, Pa1, Utx, Lpt and Ncoa6. Component of the Ada2a-containing (ATAC) complex composed of at least Ada2a, Atac1, Hcf, Ada3, Gcn5, Mocs2B, Charac-14, Atac3, Atac2, NC2beta and wds. In terms of processing, proteolytic cleavage occurs between amino acids 900 and 1100 within the non-conserved central region, giving rise to two independent but tightly associated N- and C-terminal subunits.

Its subcellular location is the nucleus. In terms of biological role, may be involved in control of the cell cycle. In Drosophila melanogaster (Fruit fly), this protein is Host cell factor.